A 119-amino-acid chain; its full sequence is Large ribosomal subunit protein bL19 (119 aa).

This sequence belongs to the bacterial ribosomal protein bL19 family.

In terms of biological role, this protein is located at the 30S-50S ribosomal subunit interface and may play a role in the structure and function of the aminoacyl-tRNA binding site. This is Large ribosomal subunit protein bL19 from Arthrobacter sp. (strain FB24).